Here is a 501-residue protein sequence, read N- to C-terminus: DEAD-box ATP-dependent RNA helicase 36 (501 aa).

The disordered stretch occupies residues 1-68 (MEVDGEARPF…AAAVTEHAGD (68 aa)). Residues 36–46 (EEPPNPSPSPA) show a composition bias toward pro residues. The span at 59-68 (AAAVTEHAGD) shows a compositional bias: low complexity. A Q motif motif is present at residues 77–105 (STFAELGLSQWLVDVCDSLGMRVPTAVQR). The 174-residue stretch at 108 to 281 (IPRALEGRDV…ELSGNNSYFF (174 aa)) folds into the Helicase ATP-binding domain. 121 to 128 (AETGSGKT) contributes to the ATP binding site. Positions 229-232 (DEAD) match the DEAD box motif. One can recognise a Helicase C-terminal domain in the interval 292–456 (TLKQLYIHVP…AYDGEMRDVN (165 aa)). Basic and acidic residues predominate over residues 473–486 (MADEGHEDKVQARK). Residues 473 to 501 (MADEGHEDKVQARKEQKKRAQERKRKHDE) form a disordered region. Positions 475–501 (DEGHEDKVQARKEQKKRAQERKRKHDE) form a coiled coil. Basic residues predominate over residues 487 to 501 (EQKKRAQERKRKHDE).

The protein belongs to the DEAD box helicase family. DDX49/DBP8 subfamily.

The catalysed reaction is ATP + H2O = ADP + phosphate + H(+). The chain is DEAD-box ATP-dependent RNA helicase 36 from Oryza sativa subsp. japonica (Rice).